The primary structure comprises 96 residues: Small ribosomal subunit protein bS20 (96 aa).

The protein belongs to the bacterial ribosomal protein bS20 family.

In terms of biological role, binds directly to 16S ribosomal RNA. The polypeptide is Small ribosomal subunit protein bS20 (Anaplasma marginale (strain St. Maries)).